Consider the following 132-residue polypeptide: Large ribosomal subunit protein bL20c (132 aa).

It belongs to the bacterial ribosomal protein bL20 family.

It is found in the plastid. The protein resides in the chloroplast. Functionally, binds directly to 23S ribosomal RNA and is necessary for the in vitro assembly process of the 50S ribosomal subunit. It is not involved in the protein synthesizing functions of that subunit. This is Large ribosomal subunit protein bL20c from Coffea arabica (Arabian coffee).